A 220-amino-acid chain; its full sequence is Thymidylate kinase (220 aa).

10-17 (GIDGCGKS) is a binding site for ATP.

The protein belongs to the thymidylate kinase family.

The enzyme catalyses dTMP + ATP = dTDP + ADP. Functionally, phosphorylation of dTMP to form dTDP in both de novo and salvage pathways of dTTP synthesis. This is Thymidylate kinase from Prochlorococcus marinus (strain SARG / CCMP1375 / SS120).